The following is a 616-amino-acid chain: Chaperone protein HscA homolog (616 aa).

Belongs to the heat shock protein 70 family.

Its function is as follows. Probable chaperone. Has a low intrinsic ATPase activity which is markedly stimulated by HscB. The sequence is that of Chaperone protein HscA homolog from Vibrio cholerae serotype O1 (strain ATCC 39315 / El Tor Inaba N16961).